Consider the following 289-residue polypeptide: Formamidopyrimidine-DNA glycosylase (289 aa).

Pro-2 serves as the catalytic Schiff-base intermediate with DNA. The active-site Proton donor is the Glu-3. The active-site Proton donor; for beta-elimination activity is Lys-60. Positions 94, 126, and 167 each coordinate DNA. The FPG-type zinc-finger motif lies at 252–287 (QVYGKPAGTPCPRCGTGLARIRIAGRSSVFCPRCQP). Arg-277 serves as the catalytic Proton donor; for delta-elimination activity.

Belongs to the FPG family. As to quaternary structure, monomer. The cofactor is Zn(2+).

The enzyme catalyses Hydrolysis of DNA containing ring-opened 7-methylguanine residues, releasing 2,6-diamino-4-hydroxy-5-(N-methyl)formamidopyrimidine.. It catalyses the reaction 2'-deoxyribonucleotide-(2'-deoxyribose 5'-phosphate)-2'-deoxyribonucleotide-DNA = a 3'-end 2'-deoxyribonucleotide-(2,3-dehydro-2,3-deoxyribose 5'-phosphate)-DNA + a 5'-end 5'-phospho-2'-deoxyribonucleoside-DNA + H(+). Involved in base excision repair of DNA damaged by oxidation or by mutagenic agents. Acts as a DNA glycosylase that recognizes and removes damaged bases. Has a preference for oxidized purines, such as 7,8-dihydro-8-oxoguanine (8-oxoG). Has AP (apurinic/apyrimidinic) lyase activity and introduces nicks in the DNA strand. Cleaves the DNA backbone by beta-delta elimination to generate a single-strand break at the site of the removed base with both 3'- and 5'-phosphates. The sequence is that of Formamidopyrimidine-DNA glycosylase from Thermomicrobium roseum (strain ATCC 27502 / DSM 5159 / P-2).